Reading from the N-terminus, the 500-residue chain is Lysine--tRNA ligase (500 aa).

Residues glutamate 410 and glutamate 417 each coordinate Mg(2+).

The protein belongs to the class-II aminoacyl-tRNA synthetase family. As to quaternary structure, homodimer. The cofactor is Mg(2+).

It localises to the cytoplasm. The enzyme catalyses tRNA(Lys) + L-lysine + ATP = L-lysyl-tRNA(Lys) + AMP + diphosphate. This Shewanella loihica (strain ATCC BAA-1088 / PV-4) protein is Lysine--tRNA ligase.